A 127-amino-acid chain; its full sequence is UPF0102 protein Glov_2230 (127 aa).

The protein belongs to the UPF0102 family.

This chain is UPF0102 protein Glov_2230, found in Trichlorobacter lovleyi (strain ATCC BAA-1151 / DSM 17278 / SZ) (Geobacter lovleyi).